Consider the following 282-residue polypeptide: Succinate dehydrogenase [ubiquinone] iron-sulfur subunit, mitochondrial (282 aa).

Residues 1 to 30 (MAAVVGVSLKRGFSATALGRVGLQFQACRE) constitute a mitochondrion transit peptide. Residues Lys-53 and Lys-57 each carry the N6-acetyllysine modification. In terms of domain architecture, 2Fe-2S ferredoxin-type spans 56-135 (DKPRMQTYKV…VSKIYPLPHM (80 aa)). [2Fe-2S] cluster contacts are provided by Cys-95, Cys-100, Cys-103, and Cys-115. Residues 148–220 (FYAQYKSIEP…PAVLMQAYRW (73 aa)) form an interaction with SDHAF1 region. One can recognise a 4Fe-4S ferredoxin-type domain in the interval 178 to 208 (DREKLDGLYECILCACCSTSCPSYWWNGDKY). Cys-188, Cys-191, and Cys-194 together coordinate [4Fe-4S] cluster. Cys-198 is a [3Fe-4S] cluster binding site. Trp-203 lines the a ubiquinone pocket. The [3Fe-4S] cluster site is built by Cys-245 and Cys-251. Cys-255 contributes to the [4Fe-4S] cluster binding site.

Belongs to the succinate dehydrogenase/fumarate reductase iron-sulfur protein family. Component of complex II composed of four subunits: the flavoprotein (FP) SDHA, iron-sulfur protein (IP) SDHB, and a cytochrome b560 composed of SDHC and SDHD. Interacts with SDHAF1; the interaction is required for iron-sulfur cluster incorporation into SDHB. It depends on [2Fe-2S] cluster as a cofactor. The cofactor is [3Fe-4S] cluster. [4Fe-4S] cluster is required as a cofactor.

It localises to the mitochondrion inner membrane. The catalysed reaction is a quinone + succinate = fumarate + a quinol. It catalyses the reaction (R)-malate + a quinone = enol-oxaloacetate + a quinol. It carries out the reaction (S)-malate + a quinone = enol-oxaloacetate + a quinol. It functions in the pathway carbohydrate metabolism; tricarboxylic acid cycle; fumarate from succinate (eukaryal route): step 1/1. Its activity is regulated as follows. Enol-oxaloacetate inhibits the succinate dehydrogenase activity. Its function is as follows. Iron-sulfur protein (IP) subunit of the succinate dehydrogenase complex (mitochondrial respiratory chain complex II), responsible for transferring electrons from succinate to ubiquinone (coenzyme Q). SDH also oxidizes malate to the non-canonical enol form of oxaloacetate, enol-oxaloacetate. Enol-oxaloacetate, which is a potent inhibitor of the succinate dehydrogenase activity, is further isomerized into keto-oxaloacetate. This Rattus norvegicus (Rat) protein is Succinate dehydrogenase [ubiquinone] iron-sulfur subunit, mitochondrial (Sdhb).